We begin with the raw amino-acid sequence, 765 residues long: Phosphoribosylformylglycinamidine synthase subunit PurL (765 aa).

Residues 1-13 (MTVSPTSAPTQAI) are compositionally biased toward polar residues. The tract at residues 1-32 (MTVSPTSAPTQAIDTVERAATTPDEPQPFGEL) is disordered. H65 is a catalytic residue. Residues Y68 and K112 each contribute to the ATP site. E114 is a binding site for Mg(2+). Substrate-binding positions include 115 to 118 (SHNH) and R137. Residue H116 is the Proton acceptor of the active site. A Mg(2+)-binding site is contributed by D138. Q263 lines the substrate pocket. A Mg(2+)-binding site is contributed by D291. 335 to 337 (ESQ) lines the substrate pocket. ATP contacts are provided by N523 and G560. Position 561 (N561) interacts with Mg(2+). S563 contributes to the substrate binding site.

This sequence belongs to the FGAMS family. Monomer. Part of the FGAM synthase complex composed of 1 PurL, 1 PurQ and 2 PurS subunits.

The protein resides in the cytoplasm. The enzyme catalyses N(2)-formyl-N(1)-(5-phospho-beta-D-ribosyl)glycinamide + L-glutamine + ATP + H2O = 2-formamido-N(1)-(5-O-phospho-beta-D-ribosyl)acetamidine + L-glutamate + ADP + phosphate + H(+). Its pathway is purine metabolism; IMP biosynthesis via de novo pathway; 5-amino-1-(5-phospho-D-ribosyl)imidazole from N(2)-formyl-N(1)-(5-phospho-D-ribosyl)glycinamide: step 1/2. In terms of biological role, part of the phosphoribosylformylglycinamidine synthase complex involved in the purines biosynthetic pathway. Catalyzes the ATP-dependent conversion of formylglycinamide ribonucleotide (FGAR) and glutamine to yield formylglycinamidine ribonucleotide (FGAM) and glutamate. The FGAM synthase complex is composed of three subunits. PurQ produces an ammonia molecule by converting glutamine to glutamate. PurL transfers the ammonia molecule to FGAR to form FGAM in an ATP-dependent manner. PurS interacts with PurQ and PurL and is thought to assist in the transfer of the ammonia molecule from PurQ to PurL. The chain is Phosphoribosylformylglycinamidine synthase subunit PurL from Mycolicibacterium paratuberculosis (strain ATCC BAA-968 / K-10) (Mycobacterium paratuberculosis).